The following is a 210-amino-acid chain: MFTSTGPFTAAHPVILASGSPRRRAFFEQMGIPFEVILPVDAEPSPIEGEQPEVYVRRAAEAKARAVAADHKGRLVVAADTVVALDDMILGKPASADDALSMLRRLAGRTHVVASGCCVVLPEGGRETFHSITRVTMWDCPEEALAAYVATGEPSDKAGAYGIQGIGAFLVRSIEGSWTNVVGLPVAELTALLLRRGAIHCQLPVEAVHA.

D80 acts as the Proton acceptor in catalysis.

The protein belongs to the Maf family. YhdE subfamily. A divalent metal cation serves as cofactor.

Its subcellular location is the cytoplasm. It carries out the reaction dTTP + H2O = dTMP + diphosphate + H(+). It catalyses the reaction UTP + H2O = UMP + diphosphate + H(+). Functionally, nucleoside triphosphate pyrophosphatase that hydrolyzes dTTP and UTP. May have a dual role in cell division arrest and in preventing the incorporation of modified nucleotides into cellular nucleic acids. This Nitratidesulfovibrio vulgaris (strain ATCC 29579 / DSM 644 / CCUG 34227 / NCIMB 8303 / VKM B-1760 / Hildenborough) (Desulfovibrio vulgaris) protein is dTTP/UTP pyrophosphatase.